The primary structure comprises 98 residues: MSMVYANIFMAFVVSLMGMLVYRSHLMSSLLCLEGMMLSLFVMMSVTILNNHFTLANMAPIILLVFAACEAALGLSLLVMVSNTYGTDYVQNLNLLQC.

The next 3 helical transmembrane spans lie at 1–21 (MSMV…GMLV), 29–49 (SLLC…VTIL), and 61–81 (IILL…LVMV).

Belongs to the complex I subunit 4L family. Core subunit of respiratory chain NADH dehydrogenase (Complex I) which is composed of 45 different subunits.

It is found in the mitochondrion inner membrane. It catalyses the reaction a ubiquinone + NADH + 5 H(+)(in) = a ubiquinol + NAD(+) + 4 H(+)(out). Functionally, core subunit of the mitochondrial membrane respiratory chain NADH dehydrogenase (Complex I) which catalyzes electron transfer from NADH through the respiratory chain, using ubiquinone as an electron acceptor. Part of the enzyme membrane arm which is embedded in the lipid bilayer and involved in proton translocation. This chain is NADH-ubiquinone oxidoreductase chain 4L (MT-ND4L), found in Odobenus rosmarus rosmarus (Atlantic walrus).